A 254-amino-acid polypeptide reads, in one-letter code: Putative electron transfer flavoprotein subunit YdiQ (254 aa).

Belongs to the ETF beta-subunit/FixA family. In terms of assembly, ydiR and YdiQ form a heterodimer.

In terms of biological role, may play a role in a redox process. This Escherichia coli (strain K12) protein is Putative electron transfer flavoprotein subunit YdiQ (ydiQ).